The chain runs to 205 residues: COP9 signalosome complex subunit 7 (205 aa).

In terms of domain architecture, PCI spans 1 to 135 (MEEKISQAID…QTLHVSWALE (135 aa)). Ser-183 carries the post-translational modification Phosphoserine.

It belongs to the CSN7/EIF3M family. CSN7 subfamily. As to quaternary structure, component of the COP9 signalosome (CSN) complex.

In terms of biological role, component of the COP9 signalosome (CSN) complex that acts as an regulator of the ubiquitin (Ubl) conjugation pathway by mediating the deneddylation of the cullin subunit of SCF-type E3 ubiquitin-protein ligase complexes. The sequence is that of COP9 signalosome complex subunit 7 (csn71) from Schizosaccharomyces pombe (strain 972 / ATCC 24843) (Fission yeast).